Reading from the N-terminus, the 596-residue chain is 3-hydroxy-3-methylglutaryl-coenzyme A reductase 1 (596 aa).

A disordered region spans residues 1–29; the sequence is MDVRRRPVKPLYTSKDASAGEPLKQQEVS. Transmembrane regions (helical) follow at residues 41–61 and 83–103; these read LYLT…FLLV and AMVS…IGFV. A linker region spans residues 104–183; the sequence is QSFVSRSNSD…SPIIMPALSE (80 aa). The tract at residues 184–596 is catalytic; sequence DDEEIIQSVV…YNRSIKDISK (413 aa). The active-site Charge relay system is the Glu278. An N-linked (GlcNAc...) asparagine glycan is attached at Asn342. Catalysis depends on Lys410, which acts as the Charge relay system. Asn455 is a glycosylation site (N-linked (GlcNAc...) asparagine). Asp486 acts as the Charge relay system in catalysis. Catalysis depends on His584, which acts as the Proton donor. N-linked (GlcNAc...) asparagine glycosylation is present at Asn588.

Belongs to the HMG-CoA reductase family. In terms of tissue distribution, expressed in flower primordia and anthers.

It localises to the endoplasmic reticulum membrane. The enzyme catalyses (R)-mevalonate + 2 NADP(+) + CoA = (3S)-3-hydroxy-3-methylglutaryl-CoA + 2 NADPH + 2 H(+). Its pathway is metabolic intermediate biosynthesis; (R)-mevalonate biosynthesis; (R)-mevalonate from acetyl-CoA: step 3/3. Functionally, catalyzes the synthesis of mevalonate. The specific precursor of all isoprenoid compounds present in plants. The protein is 3-hydroxy-3-methylglutaryl-coenzyme A reductase 1 (HMG1) of Solanum tuberosum (Potato).